Reading from the N-terminus, the 665-residue chain is RNA-directed RNA polymerase (665 aa).

It carries out the reaction RNA(n) + a ribonucleoside 5'-triphosphate = RNA(n+1) + diphosphate. Its function is as follows. RNA-dependent RNA polymerase which replicates the viral genome. The chain is RNA-directed RNA polymerase from Atkinsonella hypoxylon (AhV).